Reading from the N-terminus, the 887-residue chain is Translation initiation factor IF-2 (887 aa).

Disordered stretches follow at residues 31–87 (KLAQ…PRRI), 94–113 (SFVSEDLNSPQPPVPVDSDA), and 129–285 (VETE…KWRK). The segment covering 42-59 (SSSEKPSTKVPEKIAKEK) has biased composition (basic and acidic residues). Composition is skewed to basic and acidic residues over residues 150–171 (VVAKEPPAPKKEPEVVVKKEPP) and 199–212 (PKKEDKPAPKEKTK). A compositionally biased stretch (low complexity) spans 213–223 (TTQTKPQQSSD). Residues 241–273 (YRRDVSKKSGSDFRDRAKKDDNPKAFTGRDRYG) are compositionally biased toward basic and acidic residues. Positions 393–562 (TRPPIVAFMG…ALQAEVLELK (170 aa)) constitute a tr-type G domain. Residues 402 to 409 (GHVDHGKT) are G1. Position 402–409 (402–409 (GHVDHGKT)) interacts with GTP. The interval 427–431 (AITQH) is G2. The segment at 448–451 (DTPG) is G3. Residues 448–452 (DTPGH) and 502–505 (NKCD) contribute to the GTP site. The tract at residues 502-505 (NKCD) is G4. Residues 538–540 (SAK) form a G5 region.

Belongs to the TRAFAC class translation factor GTPase superfamily. Classic translation factor GTPase family. IF-2 subfamily.

It localises to the cytoplasm. Functionally, one of the essential components for the initiation of protein synthesis. Protects formylmethionyl-tRNA from spontaneous hydrolysis and promotes its binding to the 30S ribosomal subunits. Also involved in the hydrolysis of GTP during the formation of the 70S ribosomal complex. In Chlamydia caviae (strain ATCC VR-813 / DSM 19441 / 03DC25 / GPIC) (Chlamydophila caviae), this protein is Translation initiation factor IF-2.